The sequence spans 303 residues: Ribosomal large subunit pseudouridine synthase C (303 aa).

Residues 11–70 enclose the S4 RNA-binding domain; it reads SRLDKYLKRLYPLLTQGVIEKALRQKQITVNAQKAEASLRVKGGDKIFINDKFNLPVKQP. Residue Asp140 is part of the active site.

Belongs to the pseudouridine synthase RluA family.

It catalyses the reaction uridine(955/2504/2580) in 23S rRNA = pseudouridine(955/2504/2580) in 23S rRNA. In terms of biological role, responsible for synthesis of pseudouridine from uracil at positions 955, 2504 and 2580 in 23S ribosomal RNA. This chain is Ribosomal large subunit pseudouridine synthase C (rluC), found in Rickettsia conorii (strain ATCC VR-613 / Malish 7).